A 419-amino-acid chain; its full sequence is 3-isopropylmalate dehydratase large subunit (419 aa).

3 residues coordinate [4Fe-4S] cluster: Cys300, Cys360, and Cys363.

The protein belongs to the aconitase/IPM isomerase family. LeuC type 2 subfamily. Heterodimer of LeuC and LeuD. It depends on [4Fe-4S] cluster as a cofactor.

The enzyme catalyses (2R,3S)-3-isopropylmalate = (2S)-2-isopropylmalate. It participates in amino-acid biosynthesis; L-leucine biosynthesis; L-leucine from 3-methyl-2-oxobutanoate: step 2/4. In terms of biological role, catalyzes the isomerization between 2-isopropylmalate and 3-isopropylmalate, via the formation of 2-isopropylmaleate. The chain is 3-isopropylmalate dehydratase large subunit from Clostridium beijerinckii (strain ATCC 51743 / NCIMB 8052) (Clostridium acetobutylicum).